Reading from the N-terminus, the 162-residue chain is UPF0114 protein PFLU_5318 (162 aa).

The next 3 membrane-spanning stretches (helical) occupy residues 15–35 (LLAPIYFGLSLGLLALALKFF), 53–73 (LILVLLSLIDMALVGGLLVMV), and 136–156 (LMWYVIIHMTFVVSAFAMGYL).

It belongs to the UPF0114 family.

Its subcellular location is the cell membrane. This Pseudomonas fluorescens (strain SBW25) protein is UPF0114 protein PFLU_5318.